Consider the following 509-residue polypeptide: Cytochrome P450 monooxygenase FUP2 (509 aa).

2 helical membrane passes run 16–36 and 224–244; these read FGLA…YGCF and MVEA…FGIA. Residue C450 participates in heme binding.

This sequence belongs to the cytochrome P450 family. The cofactor is heme.

It is found in the membrane. It participates in secondary metabolite biosynthesis. Its function is as follows. Cytochrome P450 monooxygenase; part of the gene cluster that mediates the biosynthesis of the mycotoxin fusaproliferin (FUP) that belongs to the class of bicyclic sesterterpenoids. FUP2 introduces a hydroxyl group at the C-24 position resulting in the formation of preterpestacin IIa, which can be further oxidized. The oxidation of the hydroxyl group at C-24 to an aldehyde and further to a carboxylic group takes place via unspecific alcohol and aldehyde dehydrogenases and leads to the shunt products preterpestacin IIc and preterpestacin IIb, respectively. The FUP biosynthetic pathway starts with the enzyme encoded by FUP1 that combines a C-terminal prenyltransferase domain responsible for the synthesis of geranylgeranyl diphosphate with the N-terminal terpene cyclase domain, to yield preterpestacin I. Preterpestacin I is then decorated by oxygenation steps that are catalyzed by two cytochrome P450 monooxygenases. First, FUP2 introduces a hydroxyl group at the C-24 position resulting in the formation of preterpestacin IIa. The second P450 monooxygenase catalyzes the hydroxylation at C-16 and C-17 of preterpestacin IIa, producing preterpestacin III. Subsequently, the FAD-dependent oxidoreductase FUP4 catalyzes the oxidation of the hydroxy group at the C-16 position to a keto group, leading to the formation of (-)-terpestacin, which is the immediate precursor of FUP. The final step in the proposed biosynthetic pathway is the addition of an acetyl group at the C-24 position of terpestacin, which is catalyzed by the acetyltransferase FUP5. The protein is Cytochrome P450 monooxygenase FUP2 of Fusarium proliferatum (strain ET1) (Orchid endophyte fungus).